Here is a 207-residue protein sequence, read N- to C-terminus: Ribosomal RNA small subunit methyltransferase G (207 aa).

Residues G73, L78, 124–125, and R139 each bind S-adenosyl-L-methionine; that span reads VE.

Belongs to the methyltransferase superfamily. RNA methyltransferase RsmG family.

Its subcellular location is the cytoplasm. The catalysed reaction is guanosine(527) in 16S rRNA + S-adenosyl-L-methionine = N(7)-methylguanosine(527) in 16S rRNA + S-adenosyl-L-homocysteine. In terms of biological role, specifically methylates the N7 position of guanine in position 527 of 16S rRNA. This is Ribosomal RNA small subunit methyltransferase G from Klebsiella pneumoniae (strain 342).